Here is a 292-residue protein sequence, read N- to C-terminus: Large ribosomal subunit protein bL19m (292 aa).

Positions 40–61 are disordered; sequence PVRQQSTGPSEPGAFQPPPKPV. Ser77 carries the post-translational modification Phosphoserine.

This sequence belongs to the bacterial ribosomal protein bL19 family. Component of the mitochondrial ribosome large subunit (39S) which comprises a 16S rRNA and about 50 distinct proteins.

It is found in the mitochondrion. This is Large ribosomal subunit protein bL19m (MRPL19) from Pongo abelii (Sumatran orangutan).